A 98-amino-acid chain; its full sequence is Large ribosomal subunit protein bL28 (98 aa).

Belongs to the bacterial ribosomal protein bL28 family.

In Mesorhizobium japonicum (strain LMG 29417 / CECT 9101 / MAFF 303099) (Mesorhizobium loti (strain MAFF 303099)), this protein is Large ribosomal subunit protein bL28.